A 229-amino-acid polypeptide reads, in one-letter code: Small ribosomal subunit protein uS3 (229 aa).

The KH type-2 domain maps to 38–106 (IREYIENKLF…KVHINVMEVK (69 aa)). The segment covering 208–217 (PEVDENEETK) has biased composition (acidic residues). A disordered region spans residues 208-229 (PEVDENEETKEENKEKSEEKSE). Residues 218–229 (EENKEKSEEKSE) are compositionally biased toward basic and acidic residues.

It belongs to the universal ribosomal protein uS3 family. In terms of assembly, part of the 30S ribosomal subunit. Forms a tight complex with proteins S10 and S14.

In terms of biological role, binds the lower part of the 30S subunit head. Binds mRNA in the 70S ribosome, positioning it for translation. The protein is Small ribosomal subunit protein uS3 of Natranaerobius thermophilus (strain ATCC BAA-1301 / DSM 18059 / JW/NM-WN-LF).